A 37-amino-acid polypeptide reads, in one-letter code: MVEPLLSGIVLGLIPITLAGLFVTAYLQYRRGDQLDL.

Residues 5–25 (LLSGIVLGLIPITLAGLFVTA) traverse the membrane as a helical segment.

The protein belongs to the PetG family. The 4 large subunits of the cytochrome b6-f complex are cytochrome b6, subunit IV (17 kDa polypeptide, PetD), cytochrome f and the Rieske protein, while the 4 small subunits are PetG, PetL, PetM and PetN. The complex functions as a dimer.

It localises to the plastid. It is found in the chloroplast thylakoid membrane. Functionally, component of the cytochrome b6-f complex, which mediates electron transfer between photosystem II (PSII) and photosystem I (PSI), cyclic electron flow around PSI, and state transitions. PetG is required for either the stability or assembly of the cytochrome b6-f complex. The protein is Cytochrome b6-f complex subunit 5 of Zygnema circumcarinatum (Green alga).